A 1976-amino-acid chain; its full sequence is Myosin-10 (1976 aa).

The residue at position 18 (R18) is an Omega-N-methylarginine. Residues 31–81 (TAKKLVWIPSERHGFEAASIKEERGDEVLVELAENGKKAMVNKDDIQKMNP) enclose the Myosin N-terminal SH3-like domain. The Myosin motor domain occupies 85 to 783 (SKVEDMAELT…VLAHLEEERD (699 aa)). Residue 178–185 (GESGAGKT) participates in ATP binding. Residue K442 is modified to N6-acetyllysine. The interval 661–683 (LTKLMATLRNTNPNFVRCIIPNH) is actin-binding. Positions 786 to 815 (ITDIIIFFQAVCRGYLARKAFAKKQQQLSA) constitute an IQ domain. Positions 845-1976 (LQVTRQEEEL…INETQPPQSE (1132 aa)) form a coiled coil. The segment at 1126–1149 (DFESEKASRNKAEKQKRDLSEELE) is disordered. Over residues 1129-1149 (SEKASRNKAEKQKRDLSEELE) the composition is skewed to basic and acidic residues. Phosphoserine is present on S1145. N6-acetyllysine is present on residues K1241, K1301, and K1645. Disordered regions lie at residues 1697 to 1718 (ASSE…DEIA) and 1874 to 1976 (KANA…PQSE). Positions 1698–1708 (SSERARRHAEQ) are enriched in basic and acidic residues. R1930 carries the omega-N-methylarginine modification. A phosphoserine mark is found at S1935, S1937, S1938, and S1939. R1940 carries the post-translational modification Omega-N-methylarginine. 2 positions are modified to phosphoserine: S1952 and S1956. A Phosphothreonine modification is found at T1960. The segment covering 1967-1976 (INETQPPQSE) has biased composition (polar residues). S1975 bears the Phosphoserine mark.

Belongs to the TRAFAC class myosin-kinesin ATPase superfamily. Myosin family. In terms of assembly, myosin is a hexameric protein that consists of 2 heavy chain subunits (MHC), 2 alkali light chain subunits (MLC) and 2 regulatory light chain subunits (MLC-2). Interacts with PLEKHG6. Interacts with ECPAS. Interacts with KIF26B. Interacts with LARP6. Interacts with MCC. Interacts with CFAP95. Post-translationally, phosphorylated by ABL2.

The protein localises to the cell projection. It is found in the lamellipodium. Functionally, cellular myosin that appears to play a role in cytokinesis, cell shape, and specialized functions such as secretion and capping. Involved with LARP6 in the stabilization of type I collagen mRNAs for CO1A1 and CO1A2. During cell spreading, plays an important role in cytoskeleton reorganization, focal contacts formation (in the central part but not the margins of spreading cells), and lamellipodial extension; this function is mechanically antagonized by MYH9. The sequence is that of Myosin-10 (MYH10) from Bos taurus (Bovine).